Here is a 91-residue protein sequence, read N- to C-terminus: Acylphosphatase (91 aa).

Positions Arg3–Arg90 constitute an Acylphosphatase-like domain. Catalysis depends on residues Arg18 and Asn36.

Belongs to the acylphosphatase family.

The catalysed reaction is an acyl phosphate + H2O = a carboxylate + phosphate + H(+). The sequence is that of Acylphosphatase (acyP) from Methanospirillum hungatei JF-1 (strain ATCC 27890 / DSM 864 / NBRC 100397 / JF-1).